We begin with the raw amino-acid sequence, 402 residues long: Nicotinate phosphoribosyltransferase (402 aa).

Residue H224 is modified to Phosphohistidine; by autocatalysis.

Belongs to the NAPRTase family. In terms of processing, transiently phosphorylated on a His residue during the reaction cycle. Phosphorylation strongly increases the affinity for substrates and increases the rate of nicotinate D-ribonucleotide production. Dephosphorylation regenerates the low-affinity form of the enzyme, leading to product release.

It carries out the reaction nicotinate + 5-phospho-alpha-D-ribose 1-diphosphate + ATP + H2O = nicotinate beta-D-ribonucleotide + ADP + phosphate + diphosphate. Its pathway is cofactor biosynthesis; NAD(+) biosynthesis; nicotinate D-ribonucleotide from nicotinate: step 1/1. Its function is as follows. Catalyzes the synthesis of beta-nicotinate D-ribonucleotide from nicotinate and 5-phospho-D-ribose 1-phosphate at the expense of ATP. The protein is Nicotinate phosphoribosyltransferase of Neisseria meningitidis serogroup C (strain 053442).